A 204-amino-acid polypeptide reads, in one-letter code: 8-oxoguanine DNA glycosylase/AP lyase (204 aa).

Residues Lys-129 and Asp-147 contribute to the active site.

It belongs to the type-2 OGG1 family.

The catalysed reaction is 2'-deoxyribonucleotide-(2'-deoxyribose 5'-phosphate)-2'-deoxyribonucleotide-DNA = a 3'-end 2'-deoxyribonucleotide-(2,3-dehydro-2,3-deoxyribose 5'-phosphate)-DNA + a 5'-end 5'-phospho-2'-deoxyribonucleoside-DNA + H(+). Its function is as follows. Catalyzes the excision of an oxidatively damaged form of guanine (7,8-dihydro-8-oxoguanine = 8-oxoG) from DNA. Also cleaves the DNA backbone at apurinic/apyrimidinic sites (AP sites). This chain is 8-oxoguanine DNA glycosylase/AP lyase, found in Thermoplasma acidophilum (strain ATCC 25905 / DSM 1728 / JCM 9062 / NBRC 15155 / AMRC-C165).